A 235-amino-acid polypeptide reads, in one-letter code: Secretory carrier-associated membrane protein 5 (235 aa).

Residues 1-39 (MAEKVNNFPPLPKFIPLKPCFYQDFEADIPPQHLSLTKR) lie on the Cytoplasmic side of the membrane. A helical membrane pass occupies residues 40-60 (LYYLWMLNSVTLAVNLVGCLA). Topologically, residues 61-67 (WLIGGGG) are extracellular. The chain crosses the membrane as a helical span at residues 68-88 (ATNFGLAFLWLILFTPCSYVC). The Cytoplasmic segment spans residues 89–102 (WFRPIYKAFKTDSS). The chain crosses the membrane as a helical span at residues 103–125 (FSFMAFFFTFMAQLVISIIQAVG). Residues 126–148 (IPGWGVCGWIATISFFGTNIGSA) lie on the Extracellular side of the membrane. A helical membrane pass occupies residues 149-169 (VVMLIPTVMFTVVAVFSFIAL). At 170 to 235 (SMVHKFYRGS…TPNYTYSNEM (66 aa)) the chain is on the cytoplasmic side.

It belongs to the SCAMP family. SCAMP5 subfamily. Interacts (via C-terminal part) with SYT1 and SYT2; interaction with synaptotagmins making a link with the SNARE molecules. Interacts with SLC9A7. Brain-specific.

It localises to the cell membrane. The protein resides in the golgi apparatus membrane. Its subcellular location is the golgi apparatus. The protein localises to the trans-Golgi network membrane. It is found in the recycling endosome membrane. It localises to the cytoplasmic vesicle. The protein resides in the secretory vesicle. Its subcellular location is the synaptic vesicle membrane. Functionally, required for the calcium-dependent exocytosis of signal sequence-containing cytokines such as CCL5. Probably acts in cooperation with the SNARE machinery. This is Secretory carrier-associated membrane protein 5 (Scamp5) from Mus musculus (Mouse).